Consider the following 364-residue polypeptide: Triacylglycerol lipase (364 aa).

Residues 1 to 44 (MARTMRSRVVAGAVACAMSIAPFAGTTAVMTLATTHAAMAATAP) form the signal peptide. The 280-residue stretch at 54 to 333 (PIILVHGLSG…TSYKWNHLDE (280 aa)) folds into the AB hydrolase-1 domain. Leu-61 provides a ligand contact to substrate. Ser-131 functions as the Nucleophile in the catalytic mechanism. Residue Gln-132 coordinates substrate. The cysteines at positions 234 and 314 are disulfide-linked. Asp-286 contributes to the Ca(2+) binding site. Residues Asp-308 and His-330 each act as charge relay system in the active site. Ca(2+)-binding residues include Asp-332, Gln-336, and Val-340.

The protein belongs to the AB hydrolase superfamily. Pseudomonas lipase family. As to quaternary structure, monomer. Ca(2+) is required as a cofactor.

It is found in the secreted. The enzyme catalyses a triacylglycerol + H2O = a diacylglycerol + a fatty acid + H(+). Its function is as follows. Catalyzes the hydrolysis of triacylglycerol. The protein is Triacylglycerol lipase of Pseudomonas sp. (strain KWI-56).